Reading from the N-terminus, the 402-residue chain is mRNA cap guanine-N(7) methyltransferase (402 aa).

Residues 1–11 (MDHVLNPEEKV) are compositionally biased toward basic and acidic residues. The tract at residues 1 to 75 (MDHVLNPEEK…PRLEEGHGSL (75 aa)) is disordered. Residues 35 to 50 (PKLSASEKSLPGNTKS) are compositionally biased toward polar residues. Positions 55 to 72 (KAAEPDSPPKRPRLEEGH) are enriched in basic and acidic residues. Residues 94–401 (SRIFHLRNFN…IYLLFAFEKQ (308 aa)) form the mRNA cap 0 methyltransferase domain. 103 to 104 (NN) contacts mRNA. S-adenosyl-L-methionine is bound by residues Lys107, Gly131, Asp153, Asp187, Gln210, and Tyr215.

It belongs to the class I-like SAM-binding methyltransferase superfamily. mRNA cap 0 methyltransferase family.

The protein resides in the nucleus. It carries out the reaction a 5'-end (5'-triphosphoguanosine)-ribonucleoside in mRNA + S-adenosyl-L-methionine = a 5'-end (N(7)-methyl 5'-triphosphoguanosine)-ribonucleoside in mRNA + S-adenosyl-L-homocysteine. Its function is as follows. Catalytic subunit of the mRNA-capping methyltransferase RNMT:RAMAC complex that methylates the N7 position of the added guanosine to the 5'-cap structure of mRNAs. Binds RNA containing 5'-terminal GpppC. The polypeptide is mRNA cap guanine-N(7) methyltransferase (rnmt) (Xenopus laevis (African clawed frog)).